The sequence spans 244 residues: MESITIENYVFPSTMVNPPGSTNTFFLAGAGNRGLEIEGKFVKFTAIGVYLEESALPFLAAKWKSKSSEELANSLDFFRDIVTGPFEKFTRVTMILPLTGKQYSEKVAENCVAHWKAIGTYTDAESQAIEKLLNIFQNETFPPGASILFTQSPVGALTISFIKDDSITGTGNAVIENKQLSEAVLESIIGKHGVSPAAKCSIAERVSGLFKKSYADASVFEKPGIEKSSDPVIEEKPTIPEIGV.

Substrate is bound by residues T45, N110, and S187.

It belongs to the chalcone isomerase family.

It catalyses the reaction a chalcone = a flavanone.. Its pathway is secondary metabolite biosynthesis; flavonoid biosynthesis. In terms of biological role, catalyzes the intramolecular cyclization of bicyclic chalcones into tricyclic (S)-flavanones. Responsible for the isomerization of 4,2',4',6'-tetrahydroxychalcone (also termed chalcone) into naringenin. In Nicotiana tabacum (Common tobacco), this protein is Chalcone--flavanone isomerase (CHI).